The sequence spans 14507 residues: Mucin-16 (14507 aa).

Residues 1–17 (MLKPSGLPGSSSPTRSL) show a composition bias toward low complexity. The tract at residues 1 to 138 (MLKPSGLPGS…PRTRTSSTEG (138 aa)) is disordered. Residues 1–14451 (MLKPSGLPGS…EPLTGNSDLP (14451 aa)) lie on the Extracellular side of the membrane. 2 stretches are compositionally biased toward polar residues: residues 35–46 (TGATLSPKTSTG) and 56–138 (PFTS…STEG). An N-linked (GlcNAc...) asparagine glycan is attached at Asn139. Disordered stretches follow at residues 160-180 (EKYT…ETPW), 198-229 (DSTA…TNPS), 265-287 (FSSP…LSSS), 396-554 (LGGT…STSV), 655-674 (VSKT…SYTM), 695-719 (SLGL…GHTK), and 740-888 (TSTF…RTTL). A compositionally biased stretch (low complexity) spans 166 to 178 (TETSTTEGDSTET). Polar residues predominate over residues 212–229 (PAETTVTDSHTPGRTNPS). Low complexity-rich tracts occupy residues 276-287 (SRISTSAPLSSS) and 396-413 (LGGT…STTL). Polar residues-rich tracts occupy residues 414–423 (VSEETNTHHS), 431–441 (GTLNTSMTPLE), and 460–478 (GFTT…SSSH). Asn434 is a glycosylation site (N-linked (GlcNAc...) asparagine). Composition is skewed to low complexity over residues 485-497 (TTGS…SSST) and 508-525 (ATTS…ESTA). The span at 526–543 (QQFSEPQHTQWVETSPSM) shows a compositional bias: polar residues. Polar residues-rich tracts occupy residues 696-706 (LGLTPLNTRHP), 740-780 (TSTF…NAAT), 787-796 (NATSPLTHPS), and 805-821 (SVLT…SPNI). A glycan (N-linked (GlcNAc...) asparagine) is linked at Asn787. The segment covering 823 to 846 (PTGTLTSESSESPSTLSLPSVSGV) has biased composition (low complexity). 2 stretches are compositionally biased toward polar residues: residues 847-860 (KTTF…THLF) and 869-888 (TSNP…RTTL). 2 N-linked (GlcNAc...) asparagine glycosylation sites follow: Asn930 and Asn957. Polar residues-rich tracts occupy residues 949–969 (SQTN…TWPE), 1092–1101 (GSSTPGRTSQ), 1124–1137 (GTSS…TATH), and 1301–1317 (SGSS…NTGS). Disordered regions lie at residues 949-981 (SQTN…LPSA), 1082-1101 (VSPS…RTSQ), 1121-1149 (PRDG…ARST), 1301-1378 (SGSS…NLTS), 1593-1641 (LGTQ…SSSS), and 1704-1757 (LSES…SPTT). Over residues 1318–1328 (TWDPTTYITTT) the composition is skewed to low complexity. 5 stretches are compositionally biased toward polar residues: residues 1334–1347 (SSAQ…VRTL), 1368–1378 (PKISSSPNLTS), 1596–1613 (QGRS…STDT), 1621–1633 (GPTN…PMDN), and 1704–1745 (LSES…GSQM). N-linked (GlcNAc...) asparagine glycosylation is present at Asn1375. The N-linked (GlcNAc...) asparagine glycan is linked to Asn1633. Positions 1746 to 1757 (STSIPLTSSPTT) are enriched in low complexity. N-linked (GlcNAc...) asparagine glycosylation is found at Asn1840, Asn1877, and Asn1890. Polar residues predominate over residues 1846–1908 (DLSHGVHTSS…TEKSEVSSSI (63 aa)). Disordered regions lie at residues 1846 to 1930 (DLSH…PGNR), 2010 to 2033 (VSAS…YSSA), 2064 to 2140 (WPST…GASI), and 2153 to 2177 (RSDV…SAGT). Composition is skewed to low complexity over residues 2019–2033 (SVSS…YSSA) and 2064–2085 (WPST…NPSS). The segment covering 2111 to 2132 (HGPQNTAASTLNTDASSVTGLS) has biased composition (polar residues). N-linked (GlcNAc...) asparagine glycans are attached at residues Asn2345 and Asn2375. Disordered stretches follow at residues 2393–2455 (PTSI…PFTI) and 2566–2591 (SESK…ETSA). Composition is skewed to low complexity over residues 2417 to 2429 (TSTT…TSPS) and 2566 to 2583 (SESK…TPTS). The N-linked (GlcNAc...) asparagine glycan is linked to Asn2737. Disordered stretches follow at residues 2789 to 2822 (TTGS…LTMN), 2838 to 2885 (TATQ…TWGI), 2901 to 3006 (DTKS…AMTS), 3019 to 3052 (TGQA…TSRK), 3083 to 3148 (TLNM…ASSI), 3172 to 3235 (SQAA…PETT), 3251 to 3276 (ALGS…PTEN), 3299 to 3392 (GTPG…KTET), 3415 to 3436 (TSRS…TSGS), and 3462 to 3491 (VSLP…VTSP). Residues 2803–2819 (SGSTHSTGTKTFSSLPL) are compositionally biased toward polar residues. The span at 2864 to 2875 (SASSSPSKAFAS) shows a compositional bias: low complexity. Composition is skewed to polar residues over residues 2876-2885 (LTTAPPTWGI) and 2901-2918 (DTKS…NTIP). A compositionally biased stretch (low complexity) spans 2919 to 2931 (DSDASTASSSLSK). The span at 2942–2968 (MTSTKAISASSFQSTGFTETPEGSASP) shows a compositional bias: polar residues. Positions 3019–3035 (TGQAARSGSSSSPISLS) are enriched in low complexity. A compositionally biased stretch (polar residues) spans 3041-3052 (SFLSPTASTSRK). Asn3085 carries an N-linked (GlcNAc...) asparagine glycan. The segment covering 3107 to 3116 (TAETQTLTFT) has biased composition (low complexity). 2 stretches are compositionally biased toward polar residues: residues 3117–3132 (PSET…SPTE) and 3172–3181 (SQAAQGNSTW). Asn3178 carries N-linked (GlcNAc...) asparagine glycosylation. Positions 3188–3200 (TGSSPAGTSPGSP) are enriched in low complexity. Polar residues-rich tracts occupy residues 3201–3214 (EMST…SKEP) and 3251–3261 (ALGSGSTSISH). The segment covering 3263 to 3274 (PTGTTSPTKSPT) has biased composition (low complexity). Polar residues-rich tracts occupy residues 3299-3342 (GTPG…TTGM) and 3360-3383 (VSLS…SSLT). 2 stretches are compositionally biased toward low complexity: residues 3424-3436 (SSTS…TSGS) and 3477-3491 (PSGG…VTSP). Asn3501 carries N-linked (GlcNAc...) asparagine glycosylation. Over residues 3538–3555 (ISTTITTMGTNSISTTTP) the composition is skewed to low complexity. 8 disordered regions span residues 3538–3588 (ISTT…STAA), 3644–3672 (TPSS…TAST), 3794–3829 (RSSG…GQVP), 3843–3879 (AKTP…TPSA), 3914–3982 (LESG…SPVV), 4024–4056 (MDTS…SSKR), 4094–4121 (AMQT…WTGT), and 4138–4166 (FSKG…VPIH). 2 stretches are compositionally biased toward polar residues: residues 3812–3824 (QTST…TSAH) and 3848–3868 (ATFQ…TSDS). A compositionally biased stretch (low complexity) spans 3916–3927 (SGTTSSPSWKSS). Positions 3946–3982 (PSTNTVETTGWVTSSEHASHSTIPAHSASSKLTSPVV) are enriched in polar residues. A compositionally biased stretch (low complexity) spans 4026–4041 (TSSTTQTSIISSPGST). The span at 4095–4121 (MQTSPPGATSLSAPTLDTSATASWTGT) shows a compositional bias: polar residues. Residues 4152–4164 (SVEETSSSSSLVP) show a composition bias toward low complexity. 5 N-linked (GlcNAc...) asparagine glycosylation sites follow: Asn4220, Asn4498, Asn4606, Asn4613, and Asn4624. Disordered stretches follow at residues 4728–4748 (VKDV…PSSQ), 4845–4961 (HSTV…TRLS), and 5026–5066 (VSWT…KLSS). The span at 4856 to 4876 (KVTSPNVTTSTMEDTTISRSI) shows a compositional bias: polar residues. N-linked (GlcNAc...) asparagine glycosylation is present at Asn4861. 2 stretches are compositionally biased toward low complexity: residues 4877–4914 (PKSS…ETST) and 4924–4939 (TTEV…SSTS). Composition is skewed to polar residues over residues 4944–4961 (DQST…TRLS) and 5026–5037 (VSWTSPPSVDKT). Over residues 5038–5047 (SSPSSFLSSP) the composition is skewed to low complexity. The span at 5048 to 5059 (AMTTPSLISSTL) shows a compositional bias: polar residues. N-linked (GlcNAc...) asparagine glycans are attached at residues Asn5096, Asn5131, and Asn5228. Disordered regions lie at residues 5128–5149 (VKAN…ETPK), 5221–5249 (EVSS…DTFT), and 5271–5303 (TQAS…TVTQ). A compositionally biased stretch (polar residues) spans 5221-5234 (EVSSTGVNSSSKIS). Low complexity predominate over residues 5280–5293 (SHSTLPLDTSTTLS). Over residues 5294–5303 (QGGTHSTVTQ) the composition is skewed to polar residues. Asn5320 is a glycosylation site (N-linked (GlcNAc...) asparagine). Disordered regions lie at residues 5328–5365 (PVEE…PLPV), 5381–5400 (GTTS…SITH), 5426–5507 (NVGT…TNTA), 5519–5538 (ASRT…DRPT), 5624–5654 (PVEE…ESIP), 5675–5696 (LGTT…PTQE), and 5727–5747 (ISGH…KATS). Composition is skewed to low complexity over residues 5333 to 5365 (SSVS…PLPV) and 5381 to 5393 (GTTS…SSPP). Residue Asn5394 is glycosylated (N-linked (GlcNAc...) asparagine). Polar residues-rich tracts occupy residues 5426-5441 (NVGT…SSVL) and 5447-5485 (SKAT…TASL). Residue Asn5470 is glycosylated (N-linked (GlcNAc...) asparagine). 4 stretches are compositionally biased toward low complexity: residues 5495–5504 (SEKTSSTTET), 5520–5532 (SRTE…TSIS), 5633–5654 (SLMS…ESIP), and 5675–5688 (LGTT…SSPP). Asn5689 carries an N-linked (GlcNAc...) asparagine glycan. Positions 5727 to 5737 (ISGHESQSSVP) are enriched in polar residues. Asn5863 carries an N-linked (GlcNAc...) asparagine glycan. Disordered regions lie at residues 5882 to 5931 (STAS…SSPV) and 6054 to 6078 (STST…TPEL). Over residues 5903–5916 (TTTMSRSTKGVSWQ) the composition is skewed to polar residues. Residues 5917-5928 (SPPSVEETSSPS) are compositionally biased toward low complexity. Positions 6054 to 6063 (STSTPGSPET) are enriched in polar residues. Asn6088 is a glycosylation site (N-linked (GlcNAc...) asparagine). Disordered regions lie at residues 6122-6149 (PASA…PLTI), 6219-6251 (NSLS…LVSV), 6399-6425 (SRTE…DTST), 6438-6459 (TKSE…SQGT), 6497-6545 (ISGT…TSLP), and 6682-6714 (TTGA…PDIS). Low complexity-rich tracts occupy residues 6134–6149 (SPEA…PLTI), 6226–6251 (PLLV…LVSV), and 6399–6410 (SRTELTSSSRTS). Polar residues-rich tracts occupy residues 6411 to 6425 (IQGT…DTST) and 6445 to 6459 (IATQ…SQGT). Low complexity predominate over residues 6500–6523 (TSPPSVEKTSSSSSLLSLPAITSP). Composition is skewed to polar residues over residues 6530-6545 (LPES…TSLP) and 6683-6699 (TGAT…SRRT). Asn6732 carries N-linked (GlcNAc...) asparagine glycosylation. Disordered stretches follow at residues 6800-6822 (SFSS…TLPK), 6845-6865 (TLGT…STSH), and 6886-6939 (TAAT…SETT). Over residues 6848–6864 (TSPEPTTSSPPNLSSTS) the composition is skewed to low complexity. Asn6859 carries an N-linked (GlcNAc...) asparagine glycan. A compositionally biased stretch (polar residues) spans 6886–6905 (TAATNVETTSSGHGSQSSVL). Residues 6919 to 6938 (TTSTMGHTTVSTSMSVSSET) show a composition bias toward low complexity. A glycan (N-linked (GlcNAc...) asparagine) is linked at Asn6961. 14 disordered regions span residues 6981-7004 (AEVS…QSTV), 7028-7107 (MTIP…ATTS), 7143-7208 (TSPE…TSKA), 7279-7302 (SRTE…MLPE), 7320-7345 (ESSE…TLDT), 7360-7427 (QRLP…SLLT), 7437-7456 (LDAS…STSV), 7463-7503 (EVTT…ETTK), 7527-7553 (SNTR…SEET), 7577-7597 (TEAI…TMSQ), 7726-7782 (ATTT…TTSS), 7825-7849 (LASS…TKMS), 7908-7927 (HTSP…TSST), and 7970-8000 (PSFS…SPLP). Over residues 7028 to 7038 (MTIPTQTGPSG) the composition is skewed to polar residues. The span at 7039 to 7055 (STSQDTLTLDTSTTKSQ) shows a compositional bias: low complexity. The span at 7057–7075 (KTHSTLTQRFPHSEMTTLM) shows a compositional bias: polar residues. Over residues 7086–7105 (SSPSLENPSSLPSLLSLPAT) the composition is skewed to low complexity. Residues 7166–7200 (GKDTTNTEAVHPSTNTAASNVEIPSSGHESPSSAL) are compositionally biased toward polar residues. Residues 7279–7298 (SRTEVTSSSRTSISGSAEST) are compositionally biased toward low complexity. Polar residues-rich tracts occupy residues 7322 to 7345 (SEMT…TLDT), 7360 to 7371 (QRLPHSEITTLV), and 7390 to 7402 (SPPS…SAMI). 2 stretches are compositionally biased toward low complexity: residues 7403–7427 (SPSP…SLLT) and 7439–7455 (ASAE…SSTS). Residues 7474 to 7484 (FSNTAVTKVGT) are compositionally biased toward polar residues. The span at 7485-7494 (SSSGHESPSS) shows a compositional bias: low complexity. Low complexity predominate over residues 7733-7749 (GTSTEPGTSSSSSLSTT). The segment covering 7750 to 7765 (SHERLTTYKDTAHTEA) has biased composition (basic and acidic residues). Over residues 7768–7782 (PSTNTGGTNVATTSS) the composition is skewed to polar residues. Low complexity-rich tracts occupy residues 7835 to 7846 (ESSGSEGTSSGT), 7915 to 7927 (TTQG…TSST), and 7973 to 8000 (SLMS…SPLP). 2 N-linked (GlcNAc...) asparagine glycosylation sites follow: Asn8029 and Asn8055. Disordered regions lie at residues 8042–8078 (EVTT…LADS), 8111–8134 (IQTE…GTSL), 8312–8331 (GISR…TSHE), 8342–8389 (TEDM…YTMG), 8411–8472 (TSSL…ISPD), 8604–8624 (MLRT…STSA), 8674–8741 (SPMA…TKVS), and 8775–8880 (TPLT…HSSP). A compositionally biased stretch (polar residues) spans 8052–8078 (PSSNRTVTDVGTSSSGHESTSFVLADS). Positions 8319-8328 (TSSTSNLSST) are enriched in low complexity. A glycan (N-linked (GlcNAc...) asparagine) is linked at Asn8324. Positions 8345 to 8389 (MQPSTHTAVTNVRTSISGHESQSSVLSDSETPKATSPMGTTYTMG) are enriched in polar residues. Low complexity predominate over residues 8607–8624 (TSSEPETSSPPNLSSTSA). Asn8618 and Asn8684 each carry an N-linked (GlcNAc...) asparagine glycan. Composition is skewed to polar residues over residues 8674–8740 (SPMA…TTKV) and 8781–8810 (GSAE…SSRA). Positions 8850 to 8880 (TSPPSSLVSLSAVTSPSPLYSTPSESSHSSP) are enriched in low complexity. N-linked (GlcNAc...) asparagine glycosylation occurs at Asn8913. 2 disordered regions span residues 8995 to 9018 (ESTS…SATK) and 9147 to 9168 (SLSS…DSIH). An N-linked (GlcNAc...) asparagine glycan is attached at Asn9202. The segment covering 9294–9307 (SISEETSSATEKST) has biased composition (low complexity). Residues 9294–9460 (SISEETSSAT…TPSGSSHSSP (167 aa)) form a disordered region. Polar residues-rich tracts occupy residues 9308 to 9357 (VLSS…STPL) and 9374 to 9412 (SGAT…TTPM). Residues 9431-9460 (SPPSSLVSSSSVTSPSPLYSTPSGSSHSSP) are compositionally biased toward low complexity. An N-linked (GlcNAc...) asparagine glycan is attached at Asn9493. Disordered stretches follow at residues 9611–9635 (ATPE…AQST), 9726–9753 (SSSS…SPSS), 9771–9791 (VLDT…STSV), and 9869–9890 (TEPT…ETTS). The segment covering 9621-9635 (MPSSRTSIPGPAQST) has biased composition (polar residues). Composition is skewed to low complexity over residues 9774–9790 (TSSE…SSTS) and 9881–9890 (ETSTSEETTS). A glycan (N-linked (GlcNAc...) asparagine) is linked at Asn9785. Asn10075 and Asn10173 each carry an N-linked (GlcNAc...) asparagine glycan. 2 disordered regions span residues 10175–10218 (SLDT…PPAS) and 10445–10469 (TIRP…TGGT). Residues 10178-10193 (TSSVTPTNTPSSPGST) show a composition bias toward low complexity. Over residues 10194-10212 (HLLQSSKTDFTSSAKTSSP) the composition is skewed to polar residues. N-linked (GlcNAc...) asparagine glycosylation occurs at Asn10510. Over residues 10544–10573 (SLGAETSTALPRTTPSVFNRESETTASLVS) the composition is skewed to polar residues. Disordered stretches follow at residues 10544–10590 (SLGA…DVSS) and 10689–10719 (ETSS…PGAE). N-linked (GlcNAc...) asparagine glycosylation is present at Asn10700. The span at 10708–10719 (ATPSIATSPGAE) shows a compositional bias: polar residues. N-linked (GlcNAc...) asparagine glycosylation occurs at Asn10749. Over residues 10849-10860 (TTPSMTTSHGAE) the composition is skewed to polar residues. Disordered regions lie at residues 10849-10872 (TTPS…TVST), 10898-10926 (LSPG…TPTV), and 11003-11036 (LPTL…TVSP). Low complexity predominate over residues 10861–10872 (SSSAVPTPTVST). Residues 11003-11018 (LPTLTLSPGEPETTPS) show a composition bias toward low complexity. A glycan (N-linked (GlcNAc...) asparagine) is linked at Asn11053. The disordered stretch occupies residues 11072-11092 (SMATSHGAEASSAVPTPTVSP). Residues Asn11224 and Asn11263 are each glycosylated (N-linked (GlcNAc...) asparagine). Polar residues-rich tracts occupy residues 11269–11284 (HPAE…TSRF) and 11358–11381 (STTV…SIAT). Disordered stretches follow at residues 11269-11301 (HPAE…SPEA), 11358-11400 (STTV…SPDV), 11508-11537 (KFSH…STTT), 11583-11724 (ETST…TSPR), 11836-11861 (SPTA…TSTM), and 11913-11937 (QTVT…FSRT). Residue Asn11367 is glycosylated (N-linked (GlcNAc...) asparagine). 3 stretches are compositionally biased toward polar residues: residues 11583-11594 (ETSTTVSGTIPN), 11631-11651 (VTSQ…TLTP), and 11658-11672 (TTAS…QTGF). An N-linked (GlcNAc...) asparagine glycan is attached at Asn11594. Over residues 11700–11717 (PVSRTTSSFSHSSPDATP) the composition is skewed to low complexity. Composition is skewed to polar residues over residues 11849 to 11861 (PLST…TSTM) and 11913 to 11928 (QTVT…SVTS). Repeat copies occupy residues 12067–12223 (AATV…PSPT), 12224–12381 (TAGP…PTIM), 12382–12537 (AAGP…PSPA), 12538–12692 (TAGP…PSPT), 12693–12848 (TAGP…PSPT), 12849–13004 (SAGP…PSPT), 13005–13160 (TAVP…PSPT), 13161–13316 (TTGP…PGPT), 13317–13472 (ATGP…SGPM), 13473–13628 (TASP…PGPS), 13629–13784 (AASP…FGPS), and 13785–13939 (AASH…RYMA). Residues 12067–13939 (AATVPFMVPF…FTINNLRYMA (1873 aa)) form a 12 X approximate tandem repeats region. Positions 12072 to 12193 (FMVPFTLNFT…NSLYVNGFTH (122 aa)) constitute an SEA 1 domain. Asn12079, Asn12100, and Asn12116 each carry an N-linked (GlcNAc...) asparagine glycan. Cys12126 and Cys12146 form a disulfide bridge. Residue Asn12168 is glycosylated (N-linked (GlcNAc...) asparagine). The tract at residues 12196–12226 (SMPTTSTPGTSTVDVGTSGTPSSSPSPTTAG) is disordered. In terms of domain architecture, SEA 2 spans 12228–12349 (LLMPFTLNFT…NSLYVNGFTH (122 aa)). 2 N-linked (GlcNAc...) asparagine glycosylation sites follow: Asn12235 and Asn12272. Cysteines 12282 and 12302 form a disulfide. Positions 12353–12376 (VSTTSTPGTSTVDLRTSGTPSSLS) are disordered. 3 consecutive SEA domains span residues 12386-12507 (LLVP…GFTH), 12542-12663 (LLVL…GFTH), and 12697-12818 (LLVP…GFTH). Residues Asn12393, Asn12414, and Asn12430 are each glycosylated (N-linked (GlcNAc...) asparagine). Cys12440 and Cys12460 are disulfide-bonded. N-linked (GlcNAc...) asparagine glycans are attached at residues Asn12549, Asn12570, and Asn12586. A disulfide bridge links Cys12596 with Cys12616. Asn12704, Asn12725, and Asn12741 each carry an N-linked (GlcNAc...) asparagine glycan. Cys12751 and Cys12771 are disulfide-bonded. A compositionally biased stretch (polar residues) spans 12819-12834 (QTSAPNTSTPGTSTVD). The disordered stretch occupies residues 12819-12849 (QTSAPNTSTPGTSTVDLGTSGTPSSLPSPTS). Asn12824 carries an N-linked (GlcNAc...) asparagine glycan. The segment covering 12835–12849 (LGTSGTPSSLPSPTS) has biased composition (low complexity). One can recognise an SEA 6 domain in the interval 12853–12974 (LLVPFTLNFT…NSLYVNGFTH (122 aa)). Asn12860, Asn12881, and Asn12897 each carry an N-linked (GlcNAc...) asparagine glycan. Cys12907 and Cys12927 are joined by a disulfide. A compositionally biased stretch (polar residues) spans 12978 to 12990 (VAPTSTPGTSTVD). The segment at 12978-13003 (VAPTSTPGTSTVDLGTSGTPSSLPSP) is disordered. Positions 12991-13003 (LGTSGTPSSLPSP) are enriched in low complexity. 2 SEA domains span residues 13009–13130 (LLVP…GFTH) and 13165–13286 (LLVP…GFTQ). N-linked (GlcNAc...) asparagine glycosylation is found at Asn13016, Asn13037, and Asn13053. Cys13063 and Cys13083 are joined by a disulfide. Residues Asn13172 and Asn13193 are each glycosylated (N-linked (GlcNAc...) asparagine). An intrachain disulfide couples Cys13219 to Cys13239. Over residues 13291–13313 (PTTSTPGTFTVQPETSETPSSLP) the composition is skewed to polar residues. Positions 13291-13317 (PTTSTPGTFTVQPETSETPSSLPGPTA) are disordered. SEA domains lie at 13321-13442 (VLLP…GFTH) and 13477-13598 (LLVL…GFTQ). 3 N-linked (GlcNAc...) asparagine glycosylation sites follow: Asn13328, Asn13349, and Asn13365. Cysteines 13375 and 13395 form a disulfide. N-linked (GlcNAc...) asparagine glycans are attached at residues Asn13484, Asn13505, and Asn13521. Cysteines 13531 and 13551 form a disulfide. Polar residues predominate over residues 13603–13621 (PTTSIPGTPTVDLGTSGTP). Positions 13603 to 13625 (PTTSIPGTPTVDLGTSGTPVSKP) are disordered. 4 SEA domains span residues 13633 to 13754 (LLVL…GFTH), 13789 to 13909 (LLIL…GFTH), 13922 to 14043 (SEEP…GYNE), and 14073 to 14193 (HLKT…GYAP). N-linked (GlcNAc...) asparagine glycans are attached at residues Asn13640 and Asn13661. A disulfide bridge links Cys13687 with Cys13707. Asn13733, Asn13744, Asn13796, Asn13816, Asn13832, Asn13929, and Asn13950 each carry an N-linked (GlcNAc...) asparagine glycan. Cys13976 and Cys13996 form a disulfide bridge. N-linked (GlcNAc...) asparagine glycans are attached at residues Asn14080 and Asn14100. Cys14126 and Cys14146 are oxidised to a cystine. Residues Asn14195, Asn14212, Asn14254, Asn14287, Asn14326, and Asn14363 are each glycosylated (N-linked (GlcNAc...) asparagine). SEA domains lie at 14198–14309 (IRGE…EMES) and 14319–14438 (STQH…GYSP). A disulfide bond links Cys14373 and Cys14393. N-linked (GlcNAc...) asparagine glycosylation is found at Asn14417 and Asn14423. A helical membrane pass occupies residues 14452–14472 (FWAVILIGLAGLLGVITCLIC). Over 14473 to 14507 (GVLVTTRRRKKEGEYNVQQQCPGYYQSHLDLEDLQ) the chain is Cytoplasmic.

In terms of assembly, binds to MSLN. Binding to MSLN mediates heterotypic cell adhesion. This may contribute to the metastasis of ovarian cancer to the peritoneum by initiating cell attachment to the mesothelial epithelium via binding to MSLN. In terms of processing, heavily O-glycosylated; expresses both type 1 and type 2 core glycans. Heavily N-glycosylated; expresses primarily high mannose and complex bisecting type N-linked glycans. Post-translationally, may be phosphorylated. Phosphorylation of the intracellular C-terminal domain may induce proteolytic cleavage and the liberation of the extracellular domain into the extracellular space. In terms of processing, may contain numerous disulfide bridges. Association of several molecules of the secreted form may occur through interchain disulfide bridges providing an extraordinarily large gel-like matrix in the extracellular space or in the lumen of secretory ducts. In terms of tissue distribution, expressed in corneal and conjunctival epithelia (at protein level). Overexpressed in ovarian carcinomas and ovarian low malignant potential (LMP) tumors as compared to the expression in normal ovarian tissue and ovarian adenomas.

The protein localises to the cell membrane. Its subcellular location is the secreted. The protein resides in the extracellular space. In terms of biological role, thought to provide a protective, lubricating barrier against particles and infectious agents at mucosal surfaces. The sequence is that of Mucin-16 from Homo sapiens (Human).